A 141-amino-acid chain; its full sequence is Transcriptional regulator MraZ (141 aa).

SpoVT-AbrB domains are found at residues 5–47 (EYNH…PNEE) and 75–118 (AADC…SKER).

Belongs to the MraZ family. Forms oligomers.

Its subcellular location is the cytoplasm. The protein resides in the nucleoid. The sequence is that of Transcriptional regulator MraZ from Lachnoclostridium phytofermentans (strain ATCC 700394 / DSM 18823 / ISDg) (Clostridium phytofermentans).